Reading from the N-terminus, the 269-residue chain is Tryptophan synthase alpha chain (269 aa).

Active-site proton acceptor residues include glutamate 49 and aspartate 60.

Belongs to the TrpA family. In terms of assembly, tetramer of two alpha and two beta chains.

The enzyme catalyses (1S,2R)-1-C-(indol-3-yl)glycerol 3-phosphate + L-serine = D-glyceraldehyde 3-phosphate + L-tryptophan + H2O. The protein operates within amino-acid biosynthesis; L-tryptophan biosynthesis; L-tryptophan from chorismate: step 5/5. Its function is as follows. The alpha subunit is responsible for the aldol cleavage of indoleglycerol phosphate to indole and glyceraldehyde 3-phosphate. In Pseudomonas entomophila (strain L48), this protein is Tryptophan synthase alpha chain.